Here is an 87-residue protein sequence, read N- to C-terminus: Small ribosomal subunit protein uS15 (87 aa).

The segment at 1-22 (MSEINKAEIVASNARAPSDTGS) is disordered.

The protein belongs to the universal ribosomal protein uS15 family. In terms of assembly, part of the 30S ribosomal subunit. Forms a bridge to the 50S subunit in the 70S ribosome, contacting the 23S rRNA.

Its function is as follows. One of the primary rRNA binding proteins, it binds directly to 16S rRNA where it helps nucleate assembly of the platform of the 30S subunit by binding and bridging several RNA helices of the 16S rRNA. In terms of biological role, forms an intersubunit bridge (bridge B4) with the 23S rRNA of the 50S subunit in the ribosome. The polypeptide is Small ribosomal subunit protein uS15 (Leptothrix cholodnii (strain ATCC 51168 / LMG 8142 / SP-6) (Leptothrix discophora (strain SP-6))).